A 91-amino-acid chain; its full sequence is Methanol dehydrogenase [cytochrome c] subunit 2 (91 aa).

The signal sequence occupies residues 1-22; it reads MKHVLTLLALASVFAVSNQALA. A disulfide bond links cysteine 28 and cysteine 34.

It belongs to the methanol dehydrogenase subunit 2 family. As to quaternary structure, heterotetramer composed of 2 alpha and 2 beta subunits.

Its subcellular location is the cell inner membrane. The catalysed reaction is 2 Fe(III)-[cytochrome cL] + a primary alcohol = 2 Fe(II)-[cytochrome cL] + an aldehyde + 2 H(+). Functionally, catalyzes the oxidation of primary alcohols including methanol. This is Methanol dehydrogenase [cytochrome c] subunit 2 (moxI) from Methylophilus methylotrophus (Bacterium W3A1).